We begin with the raw amino-acid sequence, 424 residues long: Galacturonokinase (424 aa).

Position 2 is an N-acetylserine (serine 2). 146 to 155 contacts ATP; sequence DSSGLSSSAA. Aspartate 197 functions as the Proton acceptor in the catalytic mechanism.

The protein belongs to the GHMP kinase family. Mg(2+) serves as cofactor. It depends on Mn(2+) as a cofactor. Requires Ca(2+) as cofactor. As to expression, expressed in roots, stems, leaves, flowers and young siliques. Higher expression in the elongating middle stem region than in the lower or upper stem region.

The enzyme catalyses D-galacturonate + ATP = 1-phospho-alpha-D-galacturonate + ADP + H(+). Its activity is regulated as follows. Inhibited by EDTA and ADP. Functionally, sugar-1-kinase with a strict substrate specificity for the alpha-anomeric configuration of D-galacturonic acid (D-GalA) and ATP. Involved in the biosynthesis of UDP-galacturonic acid (UDP-GalA) from the salvaged GalA that is released during growth-dependent cell wall restructuring. The chain is Galacturonokinase (GALAK) from Arabidopsis thaliana (Mouse-ear cress).